We begin with the raw amino-acid sequence, 50 residues long: uncharacterized protein (50 aa).

Its subcellular location is the mitochondrion. This is an uncharacterized protein from Saccharomyces cerevisiae (strain ATCC 204508 / S288c) (Baker's yeast).